The following is a 188-amino-acid chain: Pyridoxal 5'-phosphate synthase subunit PdxT (188 aa).

L-glutamine is bound at residue 47–49 (GES). Cysteine 79 acts as the Nucleophile in catalysis. L-glutamine is bound by residues arginine 105 and 134-135 (IR). Catalysis depends on charge relay system residues histidine 170 and glutamate 172.

It belongs to the glutaminase PdxT/SNO family. In the presence of PdxS, forms a dodecamer of heterodimers. Only shows activity in the heterodimer.

The enzyme catalyses aldehydo-D-ribose 5-phosphate + D-glyceraldehyde 3-phosphate + L-glutamine = pyridoxal 5'-phosphate + L-glutamate + phosphate + 3 H2O + H(+). The catalysed reaction is L-glutamine + H2O = L-glutamate + NH4(+). It participates in cofactor biosynthesis; pyridoxal 5'-phosphate biosynthesis. Its function is as follows. Catalyzes the hydrolysis of glutamine to glutamate and ammonia as part of the biosynthesis of pyridoxal 5'-phosphate. The resulting ammonia molecule is channeled to the active site of PdxS. The sequence is that of Pyridoxal 5'-phosphate synthase subunit PdxT from Listeria innocua serovar 6a (strain ATCC BAA-680 / CLIP 11262).